The sequence spans 281 residues: Acetyl-coenzyme A carboxylase carboxyl transferase subunit beta (281 aa).

A disordered region spans residues 1–23 (MAWFKREKKGISTSTEEKKEAPD). The 257-residue stretch at 25–281 (LWNKCPNCKK…LAAFLKMMKN (257 aa)) folds into the CoA carboxyltransferase N-terminal domain. Positions 29, 32, 48, and 51 each coordinate Zn(2+). The C4-type zinc-finger motif lies at 29–51 (CPNCKKALHSADLLENKYVCQYC).

It belongs to the AccD/PCCB family. As to quaternary structure, acetyl-CoA carboxylase is a heterohexamer composed of biotin carboxyl carrier protein (AccB), biotin carboxylase (AccC) and two subunits each of ACCase subunit alpha (AccA) and ACCase subunit beta (AccD). Zn(2+) serves as cofactor.

It is found in the cytoplasm. The catalysed reaction is N(6)-carboxybiotinyl-L-lysyl-[protein] + acetyl-CoA = N(6)-biotinyl-L-lysyl-[protein] + malonyl-CoA. Its pathway is lipid metabolism; malonyl-CoA biosynthesis; malonyl-CoA from acetyl-CoA: step 1/1. In terms of biological role, component of the acetyl coenzyme A carboxylase (ACC) complex. Biotin carboxylase (BC) catalyzes the carboxylation of biotin on its carrier protein (BCCP) and then the CO(2) group is transferred by the transcarboxylase to acetyl-CoA to form malonyl-CoA. The chain is Acetyl-coenzyme A carboxylase carboxyl transferase subunit beta from Pedobacter heparinus (strain ATCC 13125 / DSM 2366 / CIP 104194 / JCM 7457 / NBRC 12017 / NCIMB 9290 / NRRL B-14731 / HIM 762-3).